Reading from the N-terminus, the 257-residue chain is Type III pantothenate kinase (257 aa).

An ATP-binding site is contributed by 6-13 (DCGNTNTV). Residue 107-110 (GPDR) coordinates substrate. Asp-109 acts as the Proton acceptor in catalysis. Position 129 (Asp-129) interacts with K(+). Thr-132 is an ATP binding site. A substrate-binding site is contributed by Thr-184.

It belongs to the type III pantothenate kinase family. Homodimer. The cofactor is NH4(+). K(+) is required as a cofactor.

The protein resides in the cytoplasm. It catalyses the reaction (R)-pantothenate + ATP = (R)-4'-phosphopantothenate + ADP + H(+). The protein operates within cofactor biosynthesis; coenzyme A biosynthesis; CoA from (R)-pantothenate: step 1/5. Functionally, catalyzes the phosphorylation of pantothenate (Pan), the first step in CoA biosynthesis. The chain is Type III pantothenate kinase from Cereibacter sphaeroides (strain ATCC 17025 / ATH 2.4.3) (Rhodobacter sphaeroides).